A 400-amino-acid chain; its full sequence is Phosphoglycerate kinase (400 aa).

Substrate is bound by residues 21-23, arginine 36, 59-62, arginine 114, and arginine 147; these read DLN and HLGR. ATP is bound by residues lysine 202, glutamate 329, and 355–358; that span reads GGDT.

It belongs to the phosphoglycerate kinase family. Monomer.

The protein resides in the cytoplasm. It carries out the reaction (2R)-3-phosphoglycerate + ATP = (2R)-3-phospho-glyceroyl phosphate + ADP. It participates in carbohydrate degradation; glycolysis; pyruvate from D-glyceraldehyde 3-phosphate: step 2/5. This is Phosphoglycerate kinase from Psychrobacter cryohalolentis (strain ATCC BAA-1226 / DSM 17306 / VKM B-2378 / K5).